Reading from the N-terminus, the 467-residue chain is H(+)/Cl(-) exchange transporter ClcA (467 aa).

The Cytoplasmic portion of the chain corresponds to 1-30 (MTKRERIIQSVLVKVPKDAINQFLSHGSTP). A helical membrane pass occupies residues 31–67 (ISVLFLAALVGVLAGLVGTYFEIAVHFVSETRTEWLK). Residues 68-74 (SEIGHLL) are Periplasmic-facing. The helical transmembrane segment at 75–98 (PLWLAAILISAALAFVGYFLVHRF) threads the bilayer. A Selectivity filter part_1 motif is present at residues 104-108 (GSGIP). Serine 105 lines the chloride pocket. The segment at residues 107-114 (IPEIEGAM) is an intramembrane region (helical). Residues 115–121 (DNIRPVR) are Cytoplasmic-facing. The next 2 membrane-spanning stretches (helical) occupy residues 122–139 (WWRV…ALGS) and 146–164 (EGPT…TDIF). The short motif at 144 to 148 (GREGP) is the Selectivity filter part_2 element. Over 165–174 (RVKDDDTRHS) the chain is Cytoplasmic. Intramembrane regions (helical) lie at residues 175–187 (LLAS…LAAA) and 191–199 (PLAGIMFVV). At 200–212 (EEMRPQFRYSLIS) the chain is on the cytoplasmic side. Residues 213 to 230 (IRAVIISAVMANIVFRAI) traverse the membrane as a helical segment. The Periplasmic portion of the chain corresponds to 231 to 250 (NGQDAVITMPQYQPPELKAL). The chain crosses the membrane as a helical span at residues 251 to 279 (WLFLLLGGLFGVFGVLFNKLVTVAQDAFV). Topologically, residues 280–285 (ALHKND) are cytoplasmic. The chain crosses the membrane as a helical span at residues 286–307 (RKRYLITGTCLGGIFGLLLLYV). Topologically, residues 308–327 (PELTGGGIHLIPDVTNGNYS) are periplasmic. A run of 2 helical transmembrane segments spans residues 328-347 (VSLL…ICFG) and 353-374 (GIFA…ATAK). The short motif at 353–357 (GIFAP) is the Selectivity filter part_3 element. The chloride site is built by isoleucine 354 and phenylalanine 355. Topologically, residues 375–384 (ILLPDLPIEP) are periplasmic. Positions 385–399 (GMFAIAGMGALFAAT) form an intramembrane region, helical. Residues 400–402 (VRA) constitute an intramembrane region (note=Loop between two helices). An intramembrane region (helical) is located at residues 403 to 414 (PITGILLVIEMT). The segment at residues 415 to 419 (NNYYL) is an intramembrane region (note=Loop between two helices). A helical transmembrane segment spans residues 420 to 436 (ILPLIITSLGAVICAQI). Residues 437–467 (CGGKPIYSQLLHRTIKNDKLRQQDLPEQQNS) lie on the Cytoplasmic side of the membrane. Position 443 (tyrosine 443) interacts with chloride.

It belongs to the chloride channel (TC 2.A.49) family. ClcA subfamily. In terms of assembly, homodimer.

The protein localises to the cell inner membrane. It catalyses the reaction 2 chloride(in) + H(+)(out) = 2 chloride(out) + H(+)(in). Proton-coupled chloride transporter. Functions as antiport system and exchanges two chloride ions for 1 proton. Probably acts as an electrical shunt for an outwardly-directed proton pump that is linked to amino acid decarboxylation, as part of the extreme acid resistance (XAR) response. The sequence is that of H(+)/Cl(-) exchange transporter ClcA from Vibrio vulnificus (strain CMCP6).